The chain runs to 236 residues: Pyridoxine 5'-phosphate synthase (236 aa).

Asparagine 7 is a binding site for 3-amino-2-oxopropyl phosphate. 9 to 10 (DH) provides a ligand contact to 1-deoxy-D-xylulose 5-phosphate. Arginine 18 lines the 3-amino-2-oxopropyl phosphate pocket. Histidine 43 (proton acceptor) is an active-site residue. 2 residues coordinate 1-deoxy-D-xylulose 5-phosphate: arginine 45 and histidine 50. Glutamate 69 functions as the Proton acceptor in the catalytic mechanism. Threonine 99 is a binding site for 1-deoxy-D-xylulose 5-phosphate. The active-site Proton donor is histidine 190. 3-amino-2-oxopropyl phosphate contacts are provided by residues glycine 191 and 212-213 (GH).

The protein belongs to the PNP synthase family. Homooctamer; tetramer of dimers.

It is found in the cytoplasm. It carries out the reaction 3-amino-2-oxopropyl phosphate + 1-deoxy-D-xylulose 5-phosphate = pyridoxine 5'-phosphate + phosphate + 2 H2O + H(+). The protein operates within cofactor biosynthesis; pyridoxine 5'-phosphate biosynthesis; pyridoxine 5'-phosphate from D-erythrose 4-phosphate: step 5/5. Functionally, catalyzes the complicated ring closure reaction between the two acyclic compounds 1-deoxy-D-xylulose-5-phosphate (DXP) and 3-amino-2-oxopropyl phosphate (1-amino-acetone-3-phosphate or AAP) to form pyridoxine 5'-phosphate (PNP) and inorganic phosphate. This chain is Pyridoxine 5'-phosphate synthase, found in Desulfosudis oleivorans (strain DSM 6200 / JCM 39069 / Hxd3) (Desulfococcus oleovorans).